The chain runs to 100 residues: Large ribosomal subunit protein uL23 (100 aa).

This sequence belongs to the universal ribosomal protein uL23 family. As to quaternary structure, part of the 50S ribosomal subunit. Contacts protein L29, and trigger factor when it is bound to the ribosome.

Functionally, one of the early assembly proteins it binds 23S rRNA. One of the proteins that surrounds the polypeptide exit tunnel on the outside of the ribosome. Forms the main docking site for trigger factor binding to the ribosome. The polypeptide is Large ribosomal subunit protein uL23 (Mycobacterium marinum (strain ATCC BAA-535 / M)).